Reading from the N-terminus, the 288-residue chain is Acetyl-coenzyme A carboxylase carboxyl transferase subunit beta (288 aa).

A CoA carboxyltransferase N-terminal domain is found at 34-288 (LFAKCPACKH…HLVAFHGGGQ (255 aa)). Positions 38, 41, 56, and 59 each coordinate Zn(2+). Residues 38–59 (CPACKHMIYKKDLGLAKICPTC) form a C4-type zinc finger.

The protein belongs to the AccD/PCCB family. In terms of assembly, acetyl-CoA carboxylase is a heterohexamer composed of biotin carboxyl carrier protein (AccB), biotin carboxylase (AccC) and two subunits each of ACCase subunit alpha (AccA) and ACCase subunit beta (AccD). The cofactor is Zn(2+).

The protein resides in the cytoplasm. The catalysed reaction is N(6)-carboxybiotinyl-L-lysyl-[protein] + acetyl-CoA = N(6)-biotinyl-L-lysyl-[protein] + malonyl-CoA. Its pathway is lipid metabolism; malonyl-CoA biosynthesis; malonyl-CoA from acetyl-CoA: step 1/1. Its function is as follows. Component of the acetyl coenzyme A carboxylase (ACC) complex. Biotin carboxylase (BC) catalyzes the carboxylation of biotin on its carrier protein (BCCP) and then the CO(2) group is transferred by the transcarboxylase to acetyl-CoA to form malonyl-CoA. The sequence is that of Acetyl-coenzyme A carboxylase carboxyl transferase subunit beta from Streptococcus pyogenes serotype M6 (strain ATCC BAA-946 / MGAS10394).